Consider the following 498-residue polypeptide: ATP synthase subunit beta, chloroplastic (498 aa).

172 to 179 (GGAGVGKT) contributes to the ATP binding site.

This sequence belongs to the ATPase alpha/beta chains family. F-type ATPases have 2 components, CF(1) - the catalytic core - and CF(0) - the membrane proton channel. CF(1) has five subunits: alpha(3), beta(3), gamma(1), delta(1), epsilon(1). CF(0) has four main subunits: a(1), b(1), b'(1) and c(9-12).

It is found in the plastid. Its subcellular location is the chloroplast thylakoid membrane. It carries out the reaction ATP + H2O + 4 H(+)(in) = ADP + phosphate + 5 H(+)(out). Produces ATP from ADP in the presence of a proton gradient across the membrane. The catalytic sites are hosted primarily by the beta subunits. The chain is ATP synthase subunit beta, chloroplastic from Pelargonium hortorum (Common geranium).